The sequence spans 751 residues: MVTGDPVATKTPNAADSDDNDFTASMSHLTIGQQIQELSKQLQNTKEELHQQVRDKHGALLQQATHAGRFDAALNALAEDVQRVRETGHRLKNQVDTQYQQVENQTQVLGRLHDVSHLLRSAGTLLSLTAKLKATKDVLRLAEIHFELGQLIEDKELKDIDFIQQERAYVISSAQKIRNLTQMQLVTGLQERNENQVVNALKIFMNFNTLEKSLDNLLATFIADMEQSLKECFAGNDISVLNKSPTHNVSKPAPSRGPGKTPQLTTTQNFRAKFWKSLHWLLYDELFETCTQIKLLKTALEQINQFGYTSESSDQCIPQRFWQQVQQLLRKSFDECPQHVTQTLQEGLSKLLTSARGLEQRLHGEFQFDNELFAPLEVGYVSKCAANFKACLAGVDLPGNETVDNFIRVASTELSAALIDSRLTNAIANVFAACGKELCTKLEAQIKLGADSKQVVDLPNLQQQQNTQLANVLFYYKDSVRRMLSDLHVHFEKTPGTAREIISRSLEQADLLIGTILQQIMESIITTISIIVLSMHREPGLNSERMSTTGPSMYMKELQEFVNRSWSHHIALFDDKQMTKKCGHELAKRCIELFLHNVCILRPLSSCGRQRLKQDCQHMEQALKPLCPNLAELGKPSRLLRAMSLLIVQTAEELVKQTIGEDSLVPSYIVLLLLFGHAGADLQSPHTTANWSNERLIEWLDGHTAEREKLELISGALQRYRDNARRKNIQQYDEVYPMMVDYFEQALKALP.

Disordered regions lie at residues 1-21 and 244-263; these read MVTGDPVATKTPNAADSDDND and SPTHNVSKPAPSRGPGKTPQ.

The protein belongs to the COG5 family. Component of the conserved oligomeric Golgi complex which is composed of eight different subunits and is required for normal Golgi morphology and localization.

Its subcellular location is the golgi apparatus membrane. Its function is as follows. Required for normal Golgi function and necessary during spermatogenesis. Required for cleavage furrow ingression during cytokinesis in dividing spermatocytes and for the extensive polarized cell growth that accompanies spermatid elongation. The protein is Conserved oligomeric Golgi complex subunit 5 (fws) of Drosophila melanogaster (Fruit fly).